Here is a 324-residue protein sequence, read N- to C-terminus: Beta-ketoacyl-[acyl-carrier-protein] synthase III (324 aa).

Catalysis depends on residues cysteine 114 and histidine 246. Residues 247–251 are ACP-binding; the sequence is QANLR. Asparagine 276 is a catalytic residue.

This sequence belongs to the thiolase-like superfamily. FabH family. Homodimer.

The protein localises to the cytoplasm. The enzyme catalyses malonyl-[ACP] + acetyl-CoA + H(+) = 3-oxobutanoyl-[ACP] + CO2 + CoA. It participates in lipid metabolism; fatty acid biosynthesis. Functionally, catalyzes the condensation reaction of fatty acid synthesis by the addition to an acyl acceptor of two carbons from malonyl-ACP. Catalyzes the first condensation reaction which initiates fatty acid synthesis and may therefore play a role in governing the total rate of fatty acid production. Possesses both acetoacetyl-ACP synthase and acetyl transacylase activities. Its substrate specificity determines the biosynthesis of branched-chain and/or straight-chain of fatty acids. The polypeptide is Beta-ketoacyl-[acyl-carrier-protein] synthase III (Campylobacter jejuni subsp. jejuni serotype O:2 (strain ATCC 700819 / NCTC 11168)).